Consider the following 558-residue polypeptide: Ceramide kinase-like protein (558 aa).

Residues 1-36 (MPWRRRRNRVSALEGGREEEAPPEAAAVPPALLTSP) form a disordered region. 2 short sequence motifs (nuclear localization signal) span residues 2-9 (PWRRRRNR) and 102-106 (KLKRR). The DAGKc domain occupies 164-339 (NRPKSLKILL…VDVCTFSTAG (176 aa)).

Phosphorylated on serine residues. As to expression, isoform 1 and isoform 2 are expressed in adult retina, liver and pancreas as well as in fetal brain, lung and kidney. Isoform 3 is expressed in adult retina as well as in fetal lung and liver. Isoform 4 is expressed in adult retina, lung and kidney as well as in fetal lung and liver. Moderately expressed in retina, kidney, lung, testis, trachea, and pancreas. Weakly expressed in brain, placenta and liver.

The protein localises to the cytoplasm. Its subcellular location is the nucleus. It is found in the nucleolus. It localises to the golgi apparatus. The protein resides in the trans-Golgi network. The protein localises to the endoplasmic reticulum. Its function is as follows. Has no detectable ceramide-kinase activity. Overexpression of CERKL protects cells from apoptosis in oxidative stress conditions. In Homo sapiens (Human), this protein is Ceramide kinase-like protein (CERKL).